A 179-amino-acid polypeptide reads, in one-letter code: Fimbrial subunit ElfA (179 aa).

The signal sequence occupies residues 1–21 (MKKSVLTAFITVVCATSSVMA).

Belongs to the fimbrial protein family.

It localises to the fimbrium. Part of the elfADCG-ycbUVF fimbrial operon, which promotes adhesion of bacteria to different abiotic surfaces. ElfA is the major fimbrial subunit produced by this operon. In Escherichia coli (strain K12), this protein is Fimbrial subunit ElfA (elfA).